Here is a 317-residue protein sequence, read N- to C-terminus: Protein phosphatase 1 regulatory subunit 3C (317 aa).

Residues 84-87 (RVVF) carry the PP1-binding motif motif. Positions 141–263 (PSSDYLSFRD…YRIVHVQWKP (123 aa)) are interaction with EPM2A. Residues 149 to 257 (RDRFQKNFVC…NNEAQNYRIV (109 aa)) enclose the CBM21 domain.

Interacts with PPP1CC catalytic subunit of PP1 and associates with glycogen. Forms complexes with glycogen phosphorylase, glycogen synthase and phosphorylase kinase which is necessary for its regulation of PP1 activity. Also interacts with EPM2A/laforin. In terms of processing, ubiquitinated by NHLRC1/malin in a EPM2A/laforin-dependent manner.

Functionally, acts as a glycogen-targeting subunit for PP1 and regulates its activity. Activates glycogen synthase, reduces glycogen phosphorylase activity and limits glycogen breakdown. Dramatically increases basal and insulin-stimulated glycogen synthesis upon overexpression in a variety of cell types. This Rattus norvegicus (Rat) protein is Protein phosphatase 1 regulatory subunit 3C.